A 179-amino-acid polypeptide reads, in one-letter code: Stathmin-2 (179 aa).

The tract at residues 1–26 is membrane attachment; that stretch reads MAKTAMAYKEKMKELSMLSLICSCFY. Residues serine 16, serine 50, serine 62, serine 73, serine 80, and serine 97 each carry the phosphoserine modification. The 142-residue stretch at 38–179 folds into the SLD domain; the sequence is DDMEVKQINK…NKELQVELSG (142 aa). The regulatory/phosphorylation domain stretch occupies residues 39–96; it reads DMEVKQINKRASGQAFELILKPPSPVSEAPRTLASPKKKELSLEEIQKKLEAAEERRK. Residues 74 to 179 are a coiled coil; sequence PKKKELSLEE…NKELQVELSG (106 aa).

It belongs to the stathmin family. As to expression, expression is neuron-specific and found in cerebellum, forebrain, midbrain, tectum and spinal cord.

The protein localises to the cytoplasm. It is found in the perinuclear region. It localises to the cell projection. Its subcellular location is the growth cone. The protein resides in the membrane. The protein localises to the axon. It is found in the lamellipodium. In terms of biological role, is a key regulator of neurite extension through regulation of microtubule instabilily. The protein is Stathmin-2 (STMN2) of Gallus gallus (Chicken).